The sequence spans 89 residues: Small ribosomal subunit protein uS15 (89 aa).

Belongs to the universal ribosomal protein uS15 family. Part of the 30S ribosomal subunit. Forms a bridge to the 50S subunit in the 70S ribosome, contacting the 23S rRNA.

In terms of biological role, one of the primary rRNA binding proteins, it binds directly to 16S rRNA where it helps nucleate assembly of the platform of the 30S subunit by binding and bridging several RNA helices of the 16S rRNA. Forms an intersubunit bridge (bridge B4) with the 23S rRNA of the 50S subunit in the ribosome. In Syntrophomonas wolfei subsp. wolfei (strain DSM 2245B / Goettingen), this protein is Small ribosomal subunit protein uS15.